We begin with the raw amino-acid sequence, 207 residues long: Guanylate kinase (207 aa).

Residues 10 to 187 form the Guanylate kinase-like domain; the sequence is GFFIVLSAAS…AVERLQVIYQ (178 aa). 17–24 is a binding site for ATP; the sequence is AASGTGKT.

It belongs to the guanylate kinase family.

The protein resides in the cytoplasm. The enzyme catalyses GMP + ATP = GDP + ADP. Functionally, essential for recycling GMP and indirectly, cGMP. In Syntrophus aciditrophicus (strain SB), this protein is Guanylate kinase.